The sequence spans 993 residues: uncharacterized protein (993 aa).

Residues 1–28 (MKLFPRSILITLVLSFALNLGIVTKIHA) form the signal peptide. The next 7 helical transmembrane spans lie at 331-351 (IVTA…LLAG), 359-379 (YINF…INIT), 392-412 (MIQW…SWVM), 494-514 (MLVS…AFMV), 521-541 (MISI…FLFA), 554-574 (MISF…MFSV), and 699-719 (IKNI…MYNF). The segment at 779 to 904 (GQGGGASDLE…EKVDSTSKGT (126 aa)) is disordered. Positions 805-829 (TSAPAVTTPTASSSVASSSPKTVSS) are enriched in low complexity. Residues 838 to 850 (PPAPTEAVSPPPA) are compositionally biased toward pro residues. Residues 866–879 (IIRDNNQESKKEID) are compositionally biased toward basic and acidic residues.

It belongs to the TrbL/VirB6 family.

The protein localises to the cell membrane. This is an uncharacterized protein from Rickettsia conorii (strain ATCC VR-613 / Malish 7).